A 498-amino-acid chain; its full sequence is Resveratrol cleavage oxygenase 1 (498 aa).

Piceatannol is bound by residues Y105 and K136. Positions 105 and 136 each coordinate trans-resveratrol. Fe cation contacts are provided by H169, H220, and H285. Piceatannol is bound at residue E355. Residue E355 participates in trans-resveratrol binding. A Fe cation-binding site is contributed by H481.

Belongs to the carotenoid oxygenase family. Fe(2+) serves as cofactor.

The catalysed reaction is trans-resveratrol + O2 = 3,5-dihydroxybenzaldehyde + 4-hydroxybenzaldehyde. The enzyme catalyses piceatannol + O2 = 3,5-dihydroxybenzaldehyde + 3,4-dihydroxybenzaldehyde. Dioxygenase that cleaves the interphenyl C-alpha-C-beta double bond of resveratrol to yield 3,5-dihydroxybenzaldehyde and 4-hydroxybenzaldehyde. Also cleaves piceatannol, a compound that differs from resveratrol only in the occurrence of an additional hydroxyl group, which leads to the production of 3,4-dihydroxybenzaldehyde and 3,5-hydroxybenzaldehyde. The protein is Resveratrol cleavage oxygenase 1 of Aspergillus fumigatus (strain ATCC MYA-4609 / CBS 101355 / FGSC A1100 / Af293) (Neosartorya fumigata).